The following is a 96-amino-acid chain: Aspartyl/glutamyl-tRNA(Asn/Gln) amidotransferase subunit C (96 aa).

Belongs to the GatC family. Heterotrimer of A, B and C subunits.

The catalysed reaction is L-glutamyl-tRNA(Gln) + L-glutamine + ATP + H2O = L-glutaminyl-tRNA(Gln) + L-glutamate + ADP + phosphate + H(+). The enzyme catalyses L-aspartyl-tRNA(Asn) + L-glutamine + ATP + H2O = L-asparaginyl-tRNA(Asn) + L-glutamate + ADP + phosphate + 2 H(+). In terms of biological role, allows the formation of correctly charged Asn-tRNA(Asn) or Gln-tRNA(Gln) through the transamidation of misacylated Asp-tRNA(Asn) or Glu-tRNA(Gln) in organisms which lack either or both of asparaginyl-tRNA or glutaminyl-tRNA synthetases. The reaction takes place in the presence of glutamine and ATP through an activated phospho-Asp-tRNA(Asn) or phospho-Glu-tRNA(Gln). This chain is Aspartyl/glutamyl-tRNA(Asn/Gln) amidotransferase subunit C, found in Neisseria gonorrhoeae (strain ATCC 700825 / FA 1090).